A 309-amino-acid polypeptide reads, in one-letter code: Glutaminase (309 aa).

S65, N117, E162, N169, Y193, Y245, and V263 together coordinate substrate.

Belongs to the glutaminase family. As to quaternary structure, homotetramer.

The enzyme catalyses L-glutamine + H2O = L-glutamate + NH4(+). The chain is Glutaminase from Clostridioides difficile (strain 630) (Peptoclostridium difficile).